Consider the following 72-residue polypeptide: Large ribosomal subunit protein bL28 (72 aa).

Belongs to the bacterial ribosomal protein bL28 family.

This chain is Large ribosomal subunit protein bL28, found in Chlorobium phaeovibrioides (strain DSM 265 / 1930) (Prosthecochloris vibrioformis (strain DSM 265)).